We begin with the raw amino-acid sequence, 239 residues long: 1-(5-phosphoribosyl)-5-[(5-phosphoribosylamino)methylideneamino] imidazole-4-carboxamide isomerase (239 aa).

Aspartate 8 (proton acceptor) is an active-site residue. Residue aspartate 129 is the Proton donor of the active site.

Belongs to the HisA/HisF family.

It localises to the cytoplasm. The enzyme catalyses 1-(5-phospho-beta-D-ribosyl)-5-[(5-phospho-beta-D-ribosylamino)methylideneamino]imidazole-4-carboxamide = 5-[(5-phospho-1-deoxy-D-ribulos-1-ylimino)methylamino]-1-(5-phospho-beta-D-ribosyl)imidazole-4-carboxamide. Its pathway is amino-acid biosynthesis; L-histidine biosynthesis; L-histidine from 5-phospho-alpha-D-ribose 1-diphosphate: step 4/9. The polypeptide is 1-(5-phosphoribosyl)-5-[(5-phosphoribosylamino)methylideneamino] imidazole-4-carboxamide isomerase (Bacillus cereus (strain G9842)).